The sequence spans 454 residues: Metalloprotease MTH_856 (454 aa).

Residues 92–115 (QVGSGAPSVDKTMVRSSRPPSDVP) are disordered.

It belongs to the peptidase U62 family.

Probable metalloprotease. The chain is Metalloprotease MTH_856 from Methanothermobacter thermautotrophicus (strain ATCC 29096 / DSM 1053 / JCM 10044 / NBRC 100330 / Delta H) (Methanobacterium thermoautotrophicum).